The primary structure comprises 248 residues: Ubiquinone/menaquinone biosynthesis C-methyltransferase UbiE (248 aa).

Residues Ser68 and Asp92 each contribute to the S-adenosyl-L-methionine site.

The protein belongs to the class I-like SAM-binding methyltransferase superfamily. MenG/UbiE family.

It carries out the reaction a 2-demethylmenaquinol + S-adenosyl-L-methionine = a menaquinol + S-adenosyl-L-homocysteine + H(+). The enzyme catalyses a 2-methoxy-6-(all-trans-polyprenyl)benzene-1,4-diol + S-adenosyl-L-methionine = a 5-methoxy-2-methyl-3-(all-trans-polyprenyl)benzene-1,4-diol + S-adenosyl-L-homocysteine + H(+). Its pathway is quinol/quinone metabolism; menaquinone biosynthesis; menaquinol from 1,4-dihydroxy-2-naphthoate: step 2/2. The protein operates within cofactor biosynthesis; ubiquinone biosynthesis. Functionally, methyltransferase required for the conversion of demethylmenaquinol (DMKH2) to menaquinol (MKH2) and the conversion of 2-polyprenyl-6-methoxy-1,4-benzoquinol (DDMQH2) to 2-polyprenyl-3-methyl-6-methoxy-1,4-benzoquinol (DMQH2). The protein is Ubiquinone/menaquinone biosynthesis C-methyltransferase UbiE of Rickettsia massiliae (strain Mtu5).